The primary structure comprises 171 residues: S-ribosylhomocysteine lyase (171 aa).

Residues histidine 54, histidine 58, and cysteine 128 each contribute to the Fe cation site.

It belongs to the LuxS family. As to quaternary structure, homodimer. Fe cation serves as cofactor.

It carries out the reaction S-(5-deoxy-D-ribos-5-yl)-L-homocysteine = (S)-4,5-dihydroxypentane-2,3-dione + L-homocysteine. Its function is as follows. Involved in the synthesis of autoinducer 2 (AI-2) which is secreted by bacteria and is used to communicate both the cell density and the metabolic potential of the environment. The regulation of gene expression in response to changes in cell density is called quorum sensing. Catalyzes the transformation of S-ribosylhomocysteine (RHC) to homocysteine (HC) and 4,5-dihydroxy-2,3-pentadione (DPD). The sequence is that of S-ribosylhomocysteine lyase from Klebsiella pneumoniae (strain 342).